The primary structure comprises 37 residues: Large ribosomal subunit protein bL36c (37 aa).

The protein belongs to the bacterial ribosomal protein bL36 family.

Its subcellular location is the plastid. It is found in the chloroplast. This chain is Large ribosomal subunit protein bL36c (rpl36), found in Marchantia polymorpha (Common liverwort).